A 674-amino-acid polypeptide reads, in one-letter code: Nucleoporin NDC1 (674 aa).

Over 1–24 (MATAVSRPCAGRSRDILWRVLGWR) the chain is Cytoplasmic. The chain crosses the membrane as a helical span at residues 25–45 (IVASIVWSVLFLPICTTVFII). The Perinuclear space portion of the chain corresponds to 46 to 68 (FSRIDLFHPIQWLSDSFSDLYSS). The chain crosses the membrane as a helical span at residues 69 to 89 (YVIFYFLLLSVVIIIISIFNV). Topologically, residues 90-114 (EFYAVVPSIPCSRLALIGKIIHPQQ) are cytoplasmic. Residues 115–135 (LMHSFIHAAMGMVMAWCAAVI) form a helical membrane-spanning segment. Topologically, residues 136-165 (TQGQYSFLVVPCTGTNSFGSPAAQTCLNEY) are perinuclear space. The chain crosses the membrane as a helical span at residues 166-186 (HLFFLLTGAFMGYSYSLLYFV). Over 187-225 (NNMNYLPFPIIQQYKFLRFRRSLLLLVKHSCVESLFLVR) the chain is Cytoplasmic. The helical transmembrane segment at 226-246 (NFCILYYFLGYIPKAWISTAM) threads the bilayer. At 247–272 (NLHIDEQVHRPLDTVSGLLNLSLLYH) the chain is on the perinuclear space side. The helical transmembrane segment at 273 to 293 (VWLCGVFLLTTWYVSWILFKI) threads the bilayer. Topologically, residues 294–674 (YATEAHVFPV…RLQQFLEFKE (381 aa)) are cytoplasmic. Positions 394-425 (SSSYPVEPKKLNSPEETAFQTPKSSQMPRPSV) are disordered. The residue at position 406 (Ser-406) is a Phosphoserine. Over residues 407–421 (PEETAFQTPKSSQMP) the composition is skewed to polar residues. Residue Thr-414 is modified to Phosphothreonine. Ser-439 carries the post-translational modification Phosphoserine. Thr-440 carries the post-translational modification Phosphothreonine. Ser-445 bears the Phosphoserine mark. Thr-449 bears the Phosphothreonine mark. 2 positions are modified to phosphoserine: Ser-471 and Ser-474.

Belongs to the NDC1 family. Interacts with the NUP35/NUP53. Interacts with AAAS, anchoring it to the nuclear envelope.

It localises to the nucleus. The protein resides in the nuclear pore complex. The protein localises to the nucleus membrane. Functionally, component of the nuclear pore complex (NPC), which plays a key role in de novo assembly and insertion of NPC in the nuclear envelope. Required for NPC and nuclear envelope assembly, possibly by forming a link between the nuclear envelope membrane and soluble nucleoporins, thereby anchoring the NPC in the membrane. This is Nucleoporin NDC1 (NDC1) from Homo sapiens (Human).